Reading from the N-terminus, the 674-residue chain is DNA ligase (674 aa).

NAD(+)-binding positions include 34–38 (DSEYD), 83–84 (SL), and Glu114. Lys116 serves as the catalytic N6-AMP-lysine intermediate. Arg137, Glu174, Lys290, and Lys314 together coordinate NAD(+). Residues Cys405, Cys408, Cys424, and Cys429 each contribute to the Zn(2+) site. Residues 587–674 (QSGTQFDGKM…KLSLIENTKF (88 aa)) enclose the BRCT domain.

It belongs to the NAD-dependent DNA ligase family. LigA subfamily. Mg(2+) serves as cofactor. Mn(2+) is required as a cofactor.

The enzyme catalyses NAD(+) + (deoxyribonucleotide)n-3'-hydroxyl + 5'-phospho-(deoxyribonucleotide)m = (deoxyribonucleotide)n+m + AMP + beta-nicotinamide D-nucleotide.. Its function is as follows. DNA ligase that catalyzes the formation of phosphodiester linkages between 5'-phosphoryl and 3'-hydroxyl groups in double-stranded DNA using NAD as a coenzyme and as the energy source for the reaction. It is essential for DNA replication and repair of damaged DNA. In Endomicrobium trichonymphae, this protein is DNA ligase.